Reading from the N-terminus, the 28-residue chain is Chassatide C11 (28 aa).

3 cysteine pairs are disulfide-bonded: C3-C19, C7-C21, and C12-C26. M16 bears the Methionine sulfoxide; in form chassatide chaC11A mark.

The protein belongs to the cyclotide family. Bracelet subfamily. Expressed in fruit, pedicel and stem but not in leaf and root (at protein level).

Chassatide C11: Probably participates in a plant defense mechanism. Active against E.coli ATCC 25922 (MIC=8.5 uM) but not against S.aureus ATCC 12600 or S.epidermidis ATCC 14990. Has cytotoxic and hemolytic activity. In terms of biological role, chassatide C11A: Probably participates in a plant defense mechanism. Has no activity against bacteria up to a concentration of 80 uM. Has no cytotoxic and no hemolytic activity. The sequence is that of Chassatide C11 from Chassalia chartacea (Chassalia curviflora).